Consider the following 433-residue polypeptide: Transcription factor elt-2 (433 aa).

Disordered regions lie at residues 1–47 and 194–235; these read MDNN…ELPR and GQPP…RQGL. Over residues 27–43 the composition is skewed to polar residues; that stretch reads PTQNMDPPEQNNESQLS. A compositionally biased stretch (low complexity) spans 211–234; that stretch reads AKQSSKKSSSSNRGSNGSASRRQG. A GATA-type zinc finger spans residues 237–261; the sequence is CSNCNGTNTTLWRRNAEGDPVCNAC. Residues 275–332 are disordered; sequence SMKKEGALQTRKRKSKSGDSSTPSTSRARERKFERASSSTEKAQRSSNRRAGSAKADR. A compositionally biased stretch (polar residues) spans 310 to 324; it reads ASSSTEKAQRSSNRR.

Interacts with lag-1. Interacts with pha-4. Interacts with rpt-6. May be ubiquitinated in response to infection by B.pseudomallei. Expressed in the intestine.

The protein localises to the nucleus. In terms of biological role, transcriptional activator that binds to the consensus sequence 5'-[AT]GATA[AG]-3'. Predominantly directs the transcription of intestinal genes such as ges-1, cpr-6, pho-1, ftn-1, vit-2 and lev-11, and itself. Required for gut-specific differentiation, specifically acting with the GATA region-binding transcription factor elt-7 to control normal gene expression and promote normal formation of the intestine. Regulates intestinal gene expression in response to hypoxia to promote longevity. Modulation of longevity may, in part, be the result of regulation of expression of daf-16 isoforms d and f in the intestine. Regulates tissue specific gene expression at basal levels and in response to bacterial infection in the intestine to control innate immunity. Plays a role in the induction of metal-responsive genes, activating gene expression from zinc-activated promoters and iron-dependent promoters and enhancers. May regulate the expression of genes that control sensitivity to oxidative stress, in a mab-3-dependent manner, and osmotic stress, in conjunction with the GATA region-binding transcription factor elt-3. May play a role in sphingolipid signaling by regulating the expression of the sphingosine-1-phosphate degrading enzyme, sphingosine-1-phosphate lyase. May act with the Notch signaling pathway to promote endodermal gene expression. Has a protective role in response to infection by Gram-negative bacteria such as S.enterica, E.coli, P.aeruginosa and B.pseudomallei, Gram-positive bacterium E.faecalis and fungal pathogen C.neoformans. An association with the 26S proteasome regulatory subunit rpt-6, in part, controls gene expression in response to infection by P.aeruginosa. Regulates gene expression during the recovery phase following a bacterial infection. May act with p38-activated transcription factors to control p38 gene induction in response to bacterial infection. Controls lysosome formation in the intestine by controlling lysosomal gene expression. The chain is Transcription factor elt-2 from Caenorhabditis elegans.